We begin with the raw amino-acid sequence, 318 residues long: Ribokinase (318 aa).

Substrate-binding positions include 11-13 (NTD), 41-45 (GKGAN), and glutamate 146. ATP-binding positions include asparagine 190 and 229–234 (TLGSQG). K(+)-binding residues include aspartate 256 and threonine 258. 261 to 262 (GD) is a binding site for ATP. Aspartate 262 serves as a coordination point for substrate. Aspartate 262 acts as the Proton acceptor in catalysis. 4 residues coordinate K(+): threonine 292, arginine 295, glycine 297, and serine 301.

The protein belongs to the carbohydrate kinase PfkB family. Ribokinase subfamily. As to quaternary structure, homodimer. Mg(2+) is required as a cofactor.

Its subcellular location is the cytoplasm. It is found in the nucleus. It carries out the reaction D-ribose + ATP = D-ribose 5-phosphate + ADP + H(+). The protein operates within carbohydrate metabolism; D-ribose degradation; D-ribose 5-phosphate from beta-D-ribopyranose: step 2/2. With respect to regulation, activated by a monovalent cation that binds near, but not in, the active site. The most likely occupant of the site in vivo is potassium. Ion binding induces a conformational change that may alter substrate affinity. Its function is as follows. Catalyzes the phosphorylation of ribose at O-5 in a reaction requiring ATP and magnesium. The resulting D-ribose-5-phosphate can then be used either for sythesis of nucleotides, histidine, and tryptophan, or as a component of the pentose phosphate pathway. The polypeptide is Ribokinase (Schizosaccharomyces pombe (strain 972 / ATCC 24843) (Fission yeast)).